The chain runs to 175 residues: Cell division protein SepF (175 aa).

The segment covering 20-29 has biased composition (acidic residues); sequence RYEDYDDYDD. The tract at residues 20–88 is disordered; the sequence is RYEDYDDYDD…ERPTPPLRVT (69 aa). Basic and acidic residues-rich tracts occupy residues 30–47 and 54–73; these read AEPHRREPREAVERDLGS and RRMDARESSPADPAELRRVS.

The protein belongs to the SepF family. In terms of assembly, homodimer. Interacts with FtsZ.

The protein resides in the cytoplasm. Cell division protein that is part of the divisome complex and is recruited early to the Z-ring. Probably stimulates Z-ring formation, perhaps through the cross-linking of FtsZ protofilaments. Its function overlaps with FtsA. The protein is Cell division protein SepF of Acidothermus cellulolyticus (strain ATCC 43068 / DSM 8971 / 11B).